A 216-amino-acid polypeptide reads, in one-letter code: Ribose-5-phosphate isomerase A (216 aa).

Residues 26–29 (TGST), 79–82 (DGAD), and 92–95 (KGGG) contribute to the substrate site. Catalysis depends on Glu101, which acts as the Proton acceptor. Lys119 provides a ligand contact to substrate.

This sequence belongs to the ribose 5-phosphate isomerase family. In terms of assembly, homodimer.

The catalysed reaction is aldehydo-D-ribose 5-phosphate = D-ribulose 5-phosphate. The protein operates within carbohydrate degradation; pentose phosphate pathway; D-ribose 5-phosphate from D-ribulose 5-phosphate (non-oxidative stage): step 1/1. In terms of biological role, catalyzes the reversible conversion of ribose-5-phosphate to ribulose 5-phosphate. This Legionella pneumophila (strain Lens) protein is Ribose-5-phosphate isomerase A.